The sequence spans 726 residues: MELTNLIEKCTKLSKDFATEVEKLWNDELSSESGLSRKTRNVIRNILRDITKSLTTDKKSKCFCILERSTINGEQIKDVYKTIFNNGVDVESRINTTGKYVLFTVMTYAAAELRLIKSDEIFALLSRFFNMICDIHRKYGCGNMFVGIPAALIVLLEIDHINKLFSVFSTRYDAKAYLYTEYFLFLNINHYLLSGSDLFINVAYCAVSFSSPIRVPDYIMEALTFKACDHIMKSGDLKYTYAFTKKVKDLFNTKSDSIYQYVRLHEMSYDGVSEDTDDDDEVFAILNLSIDSSVDRYRNRVLLLTPEVASLRKEYSEAEPDYKYLMDEEVSAYDKHLPKPITNTGIEEPHATGGDKEDQPIKVVYPPNNDKDDAIKPHNPLEDPNYVPTITRTDIGIADYQLVINKLIEWLDKCEEECGNGGEFKTELEEAKRKLTELNAELSDKLSKIMSLERDSVHKTERIDRLTKEIKELRDIQNGTDDGSDSSEIDKKIIRELRESLDREREMRSKLEKELDTIRDGKVEGSCQRELELRRMWLKQRDDDLRAEIDKRRNVEWELSRLRRDIKECDKYKEDLDKAKATISNYVSRISTLESEIAKYQQDRDTLSVVRRELEEERRRVKDLESRLDECTRNQEDTQEVDALRSRIRELENKLTDCIESGGGNLTEISRLQSRISDLERQLNECRGNVTEISRLESRISDLERQLNDCRRNNETNAETERDATS.

The tract at residues 342-361 (TNTGIEEPHATGGDKEDQPI) is disordered. Over residues 347–360 (EEPHATGGDKEDQP) the composition is skewed to basic and acidic residues. Repeat copies occupy residues 612–634 (RELEEERRRVKDLESRLDECTRN), 639–661 (QEVDALRSRIRELENKLTDCIES), 667–689 (TEISRLQSRISDLERQLNECRGN), and 691–713 (TEISRLESRISDLERQLNDCRRN). The interval 612–713 (RELEEERRRV…ERQLNDCRRN (102 aa)) is 4 X approximate tandem repeats.

It belongs to the poxviridae A25 protein family. Interacts (via N-terminus) with protein A26.

It localises to the virion. Functionally, structural protein that forms a matrix surrounding the mature virion (MV) through interaction with protein A26. Presence of protein A25 in the virion structurally prevents direct virus-cell fusion mechanism. This chain is A-type inclusion protein A25 homolog, found in Camelus.